A 135-amino-acid chain; its full sequence is S-protein homolog 20 (135 aa).

Positions 1–26 (MNGSSAFHIILSVTFMVFLFGGLCEA) are cleaved as a signal peptide. Asparagine 88 carries an N-linked (GlcNAc...) asparagine glycan.

Belongs to the plant self-incompatibility (S1) protein family.

The protein resides in the secreted. In Arabidopsis thaliana (Mouse-ear cress), this protein is S-protein homolog 20.